The primary structure comprises 283 residues: MRVYEALKWASSFLQENGRDENAGEIVLCHVLKVNRTGLLMNMREEITEEQEKSFTEFIHKHVEGIPIQYMIGYEIFYGRSFFVNEEVLIPRPETEELIVGVLERIERHFGDEKLHVADIGTGSGAISITLALENKNLHVYTVDIAQESIEVAKENAKALGAEVTFYHGDLLSPFHKTGQKLDVVVSNPPYIPEEDWRGLSPVVKEHEPKRALVGGEDGLDFYRRFMEELPNVLQKKAIVAFEIGVGQGEDVKRLLQQAFPHAHVEVVFDINGKDRMVFAEME.

Residues 121-125 (GTGSG), Asp-144, and Asn-188 contribute to the S-adenosyl-L-methionine site. Position 188–191 (188–191 (NPPY)) interacts with substrate.

It belongs to the protein N5-glutamine methyltransferase family. PrmC subfamily.

It carries out the reaction L-glutaminyl-[peptide chain release factor] + S-adenosyl-L-methionine = N(5)-methyl-L-glutaminyl-[peptide chain release factor] + S-adenosyl-L-homocysteine + H(+). Its function is as follows. Methylates the class 1 translation termination release factors RF1/PrfA and RF2/PrfB on the glutamine residue of the universally conserved GGQ motif. The chain is Release factor glutamine methyltransferase from Bacillus cereus (strain ATCC 14579 / DSM 31 / CCUG 7414 / JCM 2152 / NBRC 15305 / NCIMB 9373 / NCTC 2599 / NRRL B-3711).